We begin with the raw amino-acid sequence, 459 residues long: Bifunctional protein GlmU (459 aa).

Residues 1-230 (MSNRFAVILA…FDETLGVNDR (230 aa)) form a pyrophosphorylase region. Residues 9–12 (LAAG), Lys-23, Gln-73, and 78–79 (GT) each bind UDP-N-acetyl-alpha-D-glucosamine. Asp-103 is a Mg(2+) binding site. Residues Gly-140, Glu-155, Asn-170, and Asn-228 each coordinate UDP-N-acetyl-alpha-D-glucosamine. Residue Asn-228 participates in Mg(2+) binding. Residues 231–251 (VALSQAEIIMKNRINRKNMVN) are linker. An N-acetyltransferase region spans residues 252–459 (GVTIIDPSNT…VDQLLNKKKS (208 aa)). 2 residues coordinate UDP-N-acetyl-alpha-D-glucosamine: Arg-333 and Lys-351. The Proton acceptor role is filled by His-363. Positions 366 and 377 each coordinate UDP-N-acetyl-alpha-D-glucosamine. Residues 386 to 387 (NY), Ala-423, and Arg-440 each bind acetyl-CoA.

The protein in the N-terminal section; belongs to the N-acetylglucosamine-1-phosphate uridyltransferase family. It in the C-terminal section; belongs to the transferase hexapeptide repeat family. In terms of assembly, homotrimer. The cofactor is Mg(2+).

It localises to the cytoplasm. It catalyses the reaction alpha-D-glucosamine 1-phosphate + acetyl-CoA = N-acetyl-alpha-D-glucosamine 1-phosphate + CoA + H(+). The catalysed reaction is N-acetyl-alpha-D-glucosamine 1-phosphate + UTP + H(+) = UDP-N-acetyl-alpha-D-glucosamine + diphosphate. It functions in the pathway nucleotide-sugar biosynthesis; UDP-N-acetyl-alpha-D-glucosamine biosynthesis; N-acetyl-alpha-D-glucosamine 1-phosphate from alpha-D-glucosamine 6-phosphate (route II): step 2/2. The protein operates within nucleotide-sugar biosynthesis; UDP-N-acetyl-alpha-D-glucosamine biosynthesis; UDP-N-acetyl-alpha-D-glucosamine from N-acetyl-alpha-D-glucosamine 1-phosphate: step 1/1. It participates in bacterial outer membrane biogenesis; LPS lipid A biosynthesis. In terms of biological role, catalyzes the last two sequential reactions in the de novo biosynthetic pathway for UDP-N-acetylglucosamine (UDP-GlcNAc). The C-terminal domain catalyzes the transfer of acetyl group from acetyl coenzyme A to glucosamine-1-phosphate (GlcN-1-P) to produce N-acetylglucosamine-1-phosphate (GlcNAc-1-P), which is converted into UDP-GlcNAc by the transfer of uridine 5-monophosphate (from uridine 5-triphosphate), a reaction catalyzed by the N-terminal domain. The protein is Bifunctional protein GlmU of Bacillus thuringiensis subsp. konkukian (strain 97-27).